The primary structure comprises 1284 residues: ATP-dependent helicase fft2 (1284 aa).

Polar residues-rich tracts occupy residues 1–10 (MLPYNSNYLS) and 20–57 (ENPQ…AMYG). Disordered regions lie at residues 1 to 57 (MLPY…AMYG), 185 to 252 (AQPP…LPPV), 317 to 339 (KQSP…QSQK), 353 to 388 (STQA…EEPE), and 446 to 465 (PDDV…KNPM). A compositionally biased stretch (low complexity) spans 201–241 (RSNSRSSARSTARSAPRSTQRSRSSSANPVTTPPVNNTLLT). Composition is skewed to polar residues over residues 320 to 339 (PVAS…QSQK) and 353 to 372 (STQA…ASKK). The residue at position 323 (serine 323) is a Phosphoserine. Over residues 376–388 (EEDEFYDSEEEPE) the composition is skewed to acidic residues. Position 383 is a phosphoserine (serine 383). In terms of domain architecture, Helicase ATP-binding spans 562–730 (HLLYQQKLSG…VSLLAFILPN (169 aa)). Position 575–582 (575–582 (DEMGLGKT)) interacts with ATP. Residues 681 to 684 (DEGH) carry the DEGH box motif. The interval 816–839 (QQLRRDDKRNKRSKNDEESDGKSL) is disordered. Basic and acidic residues predominate over residues 818–831 (LRRDDKRNKRSKND). In terms of domain architecture, Helicase C-terminal spans 928-1079 (VLKELLPKMK…SLSSDGKDRE (152 aa)). Residues 1088–1284 (DMLDEENNGN…SEVDNNAAKD (197 aa)) are disordered. Over residues 1095-1107 (NGNNTKPEITGNE) the composition is skewed to polar residues. Residues 1143-1177 (EKTDLADGDEKANIKTEMKSETVEGDNKELRETMK) are compositionally biased toward basic and acidic residues. A compositionally biased stretch (polar residues) spans 1180 to 1194 (NVQTDSNAAVPSSKS). Composition is skewed to basic and acidic residues over residues 1243–1256 (QLEK…KKPD) and 1266–1284 (EEEK…AAKD).

It belongs to the SNF2/RAD54 helicase family.

The protein resides in the cytoplasm. It localises to the nucleus. It carries out the reaction ATP + H2O = ADP + phosphate + H(+). Its function is as follows. DNA helicase that possesses intrinsic ATP-dependent nucleosome-remodeling activity and is required for heterochromatin organization. This chain is ATP-dependent helicase fft2 (fft2), found in Schizosaccharomyces pombe (strain 972 / ATCC 24843) (Fission yeast).